A 267-amino-acid chain; its full sequence is Orotidine 5'-phosphate decarboxylase (267 aa).

Residue K93 is the Proton donor of the active site.

This sequence belongs to the OMP decarboxylase family. Type 2 subfamily.

It carries out the reaction orotidine 5'-phosphate + H(+) = UMP + CO2. It functions in the pathway pyrimidine metabolism; UMP biosynthesis via de novo pathway; UMP from orotate: step 2/2. This chain is Orotidine 5'-phosphate decarboxylase, found in Herpetosiphon aurantiacus (strain ATCC 23779 / DSM 785 / 114-95).